The primary structure comprises 881 residues: Alanine--tRNA ligase (881 aa).

It belongs to the class-II aminoacyl-tRNA synthetase family.

It is found in the cytoplasm. It catalyses the reaction tRNA(Ala) + L-alanine + ATP = L-alanyl-tRNA(Ala) + AMP + diphosphate. Catalyzes the attachment of alanine to tRNA(Ala) in a two-step reaction: alanine is first activated by ATP to form Ala-AMP and then transferred to the acceptor end of tRNA(Ala). Also edits incorrectly charged Ser-tRNA(Ala) and Gly-tRNA(Ala) via its editing domain. In Lacticaseibacillus paracasei (strain ATCC 334 / BCRC 17002 / CCUG 31169 / CIP 107868 / KCTC 3260 / NRRL B-441) (Lactobacillus paracasei), this protein is Alanine--tRNA ligase (alaS).